A 202-amino-acid polypeptide reads, in one-letter code: Transmembrane protein 223 (202 aa).

The Mitochondrial matrix segment spans residues 1-43 (MAAPWRRWPTGLLAVLRPLLTCRPLQGTTLQRDVLLFEHDRGR). A helical transmembrane segment spans residues 44-64 (FFTILGLFCAGQGVFWASMAV). Topologically, residues 65–97 (AAVSRPPVPVQPLDAEVPNRGPFDLRSALWRYG) are mitochondrial intermembrane. The chain crosses the membrane as a helical span at residues 98–118 (LAVGCGAIGALVLGAGLLFSL). Over 119-202 (RSVRSVVLRA…DNTVGAYRSL (84 aa)) the chain is Mitochondrial matrix.

It belongs to the TMEM223 family. Associates with the mitochondrial ribosome.

The protein localises to the mitochondrion inner membrane. In terms of biological role, mitochondrial ribosome-associated protein involved in the first steps of cytochrome c oxidase complex (complex IV) biogenesis. Stimulates the translation of MT-CO1 mRNA and is a constituent of early MT-CO1 assembly intermediates. The sequence is that of Transmembrane protein 223 from Homo sapiens (Human).